Reading from the N-terminus, the 376-residue chain is Ribonucleoside-diphosphate reductase 1 subunit beta (376 aa).

Residues Asp-85, Glu-116, and His-119 each coordinate Fe cation. Residue Tyr-123 is part of the active site. The Fe cation site is built by Glu-205, Glu-239, and His-242.

This sequence belongs to the ribonucleoside diphosphate reductase small chain family. In terms of assembly, tetramer of two alpha (R1) and two beta (R2) subunits. The B1 protein is a dimer of alpha subunits. A radical transfer pathway occurs between Tyr-123 of R2 and R1. Requires Fe cation as cofactor.

The enzyme catalyses a 2'-deoxyribonucleoside 5'-diphosphate + [thioredoxin]-disulfide + H2O = a ribonucleoside 5'-diphosphate + [thioredoxin]-dithiol. Its function is as follows. Provides the precursors necessary for DNA synthesis. Catalyzes the biosynthesis of deoxyribonucleotides from the corresponding ribonucleotides. R2 contains the tyrosyl radical required for catalysis. The polypeptide is Ribonucleoside-diphosphate reductase 1 subunit beta (nrdB) (Salmonella typhimurium (strain LT2 / SGSC1412 / ATCC 700720)).